Here is a 263-residue protein sequence, read N- to C-terminus: Trans-2-decenoyl-[acyl-carrier-protein] isomerase (263 aa).

It belongs to the enoyl-CoA hydratase/isomerase family. As to quaternary structure, homotetramer.

It carries out the reaction (2E)-decenoyl-[ACP] = (3Z)-decenoyl-[ACP]. It participates in lipid metabolism; fatty acid biosynthesis. Its function is as follows. Catalyzes the isomerization of trans-2-decenoyl-ACP to cis-3-decenoyl-ACP. Required for survival at low pH. The chain is Trans-2-decenoyl-[acyl-carrier-protein] isomerase (fabM) from Streptococcus mutans serotype c (strain ATCC 700610 / UA159).